We begin with the raw amino-acid sequence, 125 residues long: Photoactive yellow protein (125 aa).

Positions 23-86 (LDGLAFGAIQ…GKFKEGVASG (64 aa)) constitute a PAS domain. Residue C69 is modified to S-(4-hydroxycinnamyl)cysteine.

Belongs to the photoactive yellow protein family. As to quaternary structure, monomer. In terms of processing, the 4-hydroxycinnamic acid (p-coumaric acid) chromophore is covalently bound via a thioester linkage.

In terms of biological role, photoactive blue light protein. Probably functions as a photoreceptor for a negative phototaxis response. The polypeptide is Photoactive yellow protein (pyp) (Halorhodospira halophila (Ectothiorhodospira halophila)).